The primary structure comprises 1364 residues: DNA-directed RNA polymerase subunit beta' (1364 aa).

Residues Cys250, Cys317, Cys324, and Cys327 each coordinate Zn(2+). Positions 1318-1342 (TRHNIDPSASTNAAFTRPDVDNELK) are disordered.

Belongs to the RNA polymerase beta' chain family. RpoC2 subfamily. As to quaternary structure, in cyanobacteria the RNAP catalytic core is composed of 2 alpha, 1 beta, 1 beta', 1 gamma and 1 omega subunit. When a sigma factor is associated with the core the holoenzyme is formed, which can initiate transcription. Requires Zn(2+) as cofactor.

It catalyses the reaction RNA(n) + a ribonucleoside 5'-triphosphate = RNA(n+1) + diphosphate. In terms of biological role, DNA-dependent RNA polymerase catalyzes the transcription of DNA into RNA using the four ribonucleoside triphosphates as substrates. The chain is DNA-directed RNA polymerase subunit beta' from Synechococcus sp. (strain CC9902).